Here is an 860-residue protein sequence, read N- to C-terminus: DNA mismatch repair protein MutS (860 aa).

607–614 (GPNMSGKS) is a binding site for ATP.

Belongs to the DNA mismatch repair MutS family.

Functionally, this protein is involved in the repair of mismatches in DNA. It is possible that it carries out the mismatch recognition step. This protein has a weak ATPase activity. The sequence is that of DNA mismatch repair protein MutS from Listeria innocua serovar 6a (strain ATCC BAA-680 / CLIP 11262).